Reading from the N-terminus, the 441-residue chain is 3-phosphoshikimate 1-carboxyvinyltransferase (441 aa).

The segment at 1 to 24 (MSGTGQSDDPRELKAGGSLQGRVK) is disordered. Residues Lys-29, Ser-30, and Arg-34 each contribute to the 3-phosphoshikimate site. Residue Lys-29 participates in phosphoenolpyruvate binding. Positions 103 and 132 each coordinate phosphoenolpyruvate. 4 residues coordinate 3-phosphoshikimate: Ser-177, Gln-179, Asp-328, and Lys-355. Position 179 (Gln-179) interacts with phosphoenolpyruvate. The active-site Proton acceptor is Asp-328. Positions 359 and 401 each coordinate phosphoenolpyruvate.

It belongs to the EPSP synthase family. In terms of assembly, monomer.

Its subcellular location is the cytoplasm. It catalyses the reaction 3-phosphoshikimate + phosphoenolpyruvate = 5-O-(1-carboxyvinyl)-3-phosphoshikimate + phosphate. It participates in metabolic intermediate biosynthesis; chorismate biosynthesis; chorismate from D-erythrose 4-phosphate and phosphoenolpyruvate: step 6/7. In terms of biological role, catalyzes the transfer of the enolpyruvyl moiety of phosphoenolpyruvate (PEP) to the 5-hydroxyl of shikimate-3-phosphate (S3P) to produce enolpyruvyl shikimate-3-phosphate and inorganic phosphate. In Synechococcus sp. (strain CC9605), this protein is 3-phosphoshikimate 1-carboxyvinyltransferase.